A 78-amino-acid chain; its full sequence is uncharacterized protein (78 aa).

This is an uncharacterized protein from Mycoplasma (Bacteriophage L2).